Reading from the N-terminus, the 409-residue chain is Glutamyl-tRNA reductase (409 aa).

Residues 46-49 (TCNR), Ser-88, 93-95 (ENE), and Gln-99 each bind substrate. Residue Cys-47 is the Nucleophile of the active site. 164-169 (GNGMIA) serves as a coordination point for NADP(+).

Belongs to the glutamyl-tRNA reductase family. Homodimer.

It carries out the reaction (S)-4-amino-5-oxopentanoate + tRNA(Glu) + NADP(+) = L-glutamyl-tRNA(Glu) + NADPH + H(+). It functions in the pathway porphyrin-containing compound metabolism; protoporphyrin-IX biosynthesis; 5-aminolevulinate from L-glutamyl-tRNA(Glu): step 1/2. Functionally, catalyzes the NADPH-dependent reduction of glutamyl-tRNA(Glu) to glutamate 1-semialdehyde (GSA). The chain is Glutamyl-tRNA reductase from Thermoplasma acidophilum (strain ATCC 25905 / DSM 1728 / JCM 9062 / NBRC 15155 / AMRC-C165).